The sequence spans 39 residues: Putative beta-neurotoxin (39 aa).

The segment at 1–39 (GGKEGYPLNSSNGCKSGRFAGTNSNENTECKGXDAENGY) is disordered. Residues 3–39 (KEGYPLNSSNGCKSGRFAGTNSNENTECKGXDAENGY) enclose the LCN-type CS-alpha/beta domain. The segment covering 28-39 (TECKGXDAENGY) has biased composition (basic and acidic residues).

The protein belongs to the long (4 C-C) scorpion toxin superfamily. Sodium channel inhibitor family. Beta subfamily. In terms of tissue distribution, expressed by the venom gland.

The protein resides in the secreted. In terms of biological role, beta toxins bind voltage-independently at site-4 of sodium channels (Nav) and shift the voltage of activation toward more negative potentials thereby affecting sodium channel activation and promoting spontaneous and repetitive firing. The sequence is that of Putative beta-neurotoxin from Tityus pachyurus (Colombian scorpion).